Reading from the N-terminus, the 644-residue chain is Ribonuclease R (644 aa).

One can recognise an RNB domain in the interval 211 to 529 (RINYSHIPFI…LHRLLKELLF (319 aa)). Positions 573–644 (LELLEKEFLG…ITERIKEHVS (72 aa)) constitute an S1 motif domain.

The protein belongs to the RNR ribonuclease family. RNase R subfamily.

It localises to the cytoplasm. The catalysed reaction is Exonucleolytic cleavage in the 3'- to 5'-direction to yield nucleoside 5'-phosphates.. 3'-5' exoribonuclease that releases 5'-nucleoside monophosphates and is involved in maturation of structured RNAs. This Helicobacter pylori (strain ATCC 700392 / 26695) (Campylobacter pylori) protein is Ribonuclease R.